Here is a 360-residue protein sequence, read N- to C-terminus: COP9 signalosome complex subunit 5 (360 aa).

The region spanning 60 to 197 (AKISALALLK…IGAFRTYPKD (138 aa)) is the MPN domain. The Zn(2+) site is built by His143, His145, and Asp156. The JAMM motif motif lies at 143–156 (HSHPGYGCWLSGID). Disordered regions lie at residues 293–315 (LMPS…RDSS) and 341–360 (SNKA…MVEA). A compositionally biased stretch (polar residues) spans 341–350 (SNKASTSAPD).

The protein belongs to the peptidase M67A family. CSN5 subfamily. In terms of assembly, component of the CSN complex, probably composed of CSN1, CSN2, CSN3, CSN4, CSN5, CSN6, CSN7 and CSN8. Interacts with MCM2.

In terms of biological role, probable protease subunit of the COP9 signalosome complex (CSN), a complex involved in various cellular and developmental processes such as photomorphogenesis and response to hormones. The CSN complex is an essential regulator of the ubiquitin (Ubl) conjugation pathway by mediating the deneddylation of the cullin subunits of SCF-type E3 ligase complexes, leading to decrease the Ubl ligase activity of SCF. Involved in early response to iron deficiency. This chain is COP9 signalosome complex subunit 5, found in Oryza sativa subsp. japonica (Rice).